A 96-amino-acid chain; its full sequence is Protein transport protein Sec61 subunit beta (96 aa).

Polar residues predominate over residues 1–17 (MPGPTPSGTNVGSSGRS). The tract at residues 1-54 (MPGPTPSGTNVGSSGRSPSKAVAARAAGSTVRQRKNASCGTRSAGRTTSAGTGG) is disordered. Pro-2 carries the post-translational modification N-acetylproline. At 2–70 (PGPTPSGTNV…EDSPGLKVGP (69 aa)) the chain is on the cytoplasmic side. At Ser-7 the chain carries Phosphoserine. The residue at position 9 (Thr-9) is a Phosphothreonine. 3 positions are modified to phosphoserine: Ser-13, Ser-14, and Ser-17. Cys-39 carries S-palmitoyl cysteine lipidation. The segment covering 40 to 50 (GTRSAGRTTSA) has biased composition (low complexity). The helical transmembrane segment at 71-91 (VPVLVMSLLFIAAVFMLHIWG) threads the bilayer.

It belongs to the SEC61-beta family. The SEC61 channel-forming translocon complex consists of channel-forming core components SEC61A1, SEC61B and SEC61G and different auxiliary components such as SEC62 and SEC63. The SEC61 channel associates with the multi-pass translocon (MPT) complex. Interacts with TRAM1.

Its subcellular location is the endoplasmic reticulum membrane. Its function is as follows. Component of SEC61 channel-forming translocon complex that mediates transport of signal peptide-containing precursor polypeptides across the endoplasmic reticulum (ER). Forms a ribosome receptor and a gated pore in the ER membrane, both functions required for cotranslational translocation of nascent polypeptides. The SEC61 channel is also involved in ER membrane insertion of transmembrane proteins: it mediates membrane insertion of the first few transmembrane segments of proteins, while insertion of subsequent transmembrane regions of multi-pass membrane proteins is mediated by the multi-pass translocon (MPT) complex. The SEC61 channel cooperates with the translocating protein TRAM1 to import nascent proteins into the ER. Required for PKD1/Polycystin-1 biogenesis. The protein is Protein transport protein Sec61 subunit beta of Mus musculus (Mouse).